The chain runs to 311 residues: Methionyl-tRNA formyltransferase (311 aa).

112 to 115 provides a ligand contact to (6S)-5,6,7,8-tetrahydrofolate; the sequence is SLLP.

The protein belongs to the Fmt family.

It carries out the reaction L-methionyl-tRNA(fMet) + (6R)-10-formyltetrahydrofolate = N-formyl-L-methionyl-tRNA(fMet) + (6S)-5,6,7,8-tetrahydrofolate + H(+). Its function is as follows. Attaches a formyl group to the free amino group of methionyl-tRNA(fMet). The formyl group appears to play a dual role in the initiator identity of N-formylmethionyl-tRNA by promoting its recognition by IF2 and preventing the misappropriation of this tRNA by the elongation apparatus. The sequence is that of Methionyl-tRNA formyltransferase from Rhizobium etli (strain ATCC 51251 / DSM 11541 / JCM 21823 / NBRC 15573 / CFN 42).